A 222-amino-acid polypeptide reads, in one-letter code: UPF0758 protein YPN_3801 (222 aa).

In terms of domain architecture, MPN spans 100–222 (VLLNPGITQK…CVSFAERGWL (123 aa)). Positions 171, 173, and 184 each coordinate Zn(2+). The JAMM motif motif lies at 171-184 (HNHPSGKAEPSQAD).

Belongs to the UPF0758 family. YicR subfamily.

The protein is UPF0758 protein YPN_3801 of Yersinia pestis bv. Antiqua (strain Nepal516).